The chain runs to 182 residues: NADH-quinone oxidoreductase subunit I (182 aa).

4Fe-4S ferredoxin-type domains lie at 52-82 and 92-121; these read LTRD…LQKA and DFFR…LTPD. Positions 62, 65, 68, 72, 101, 104, 107, and 111 each coordinate [4Fe-4S] cluster.

This sequence belongs to the complex I 23 kDa subunit family. In terms of assembly, NDH-1 is composed of 13 different subunits. Subunits NuoA, H, J, K, L, M, N constitute the membrane sector of the complex. It depends on [4Fe-4S] cluster as a cofactor.

It is found in the cell inner membrane. It catalyses the reaction a quinone + NADH + 5 H(+)(in) = a quinol + NAD(+) + 4 H(+)(out). NDH-1 shuttles electrons from NADH, via FMN and iron-sulfur (Fe-S) centers, to quinones in the respiratory chain. The immediate electron acceptor for the enzyme in this species is believed to be ubiquinone. Couples the redox reaction to proton translocation (for every two electrons transferred, four hydrogen ions are translocated across the cytoplasmic membrane), and thus conserves the redox energy in a proton gradient. The polypeptide is NADH-quinone oxidoreductase subunit I (Pseudomonas syringae pv. tomato (strain ATCC BAA-871 / DC3000)).